A 487-amino-acid polypeptide reads, in one-letter code: Glutamyl-tRNA(Gln) amidotransferase subunit A (487 aa).

Active-site charge relay system residues include Lys80 and Ser155. Ser179 serves as the catalytic Acyl-ester intermediate.

Belongs to the amidase family. GatA subfamily. In terms of assembly, heterotrimer of A, B and C subunits.

It catalyses the reaction L-glutamyl-tRNA(Gln) + L-glutamine + ATP + H2O = L-glutaminyl-tRNA(Gln) + L-glutamate + ADP + phosphate + H(+). Its function is as follows. Allows the formation of correctly charged Gln-tRNA(Gln) through the transamidation of misacylated Glu-tRNA(Gln) in organisms which lack glutaminyl-tRNA synthetase. The reaction takes place in the presence of glutamine and ATP through an activated gamma-phospho-Glu-tRNA(Gln). This Leptospira interrogans serogroup Icterohaemorrhagiae serovar copenhageni (strain Fiocruz L1-130) protein is Glutamyl-tRNA(Gln) amidotransferase subunit A.